A 371-amino-acid polypeptide reads, in one-letter code: Bifunctional enzyme IspD/IspF (371 aa).

The tract at residues 1–212 is 2-C-methyl-D-erythritol 4-phosphate cytidylyltransferase; that stretch reads MKDITLVLLA…FDFTPASGTI (212 aa). The interval 213–371 is 2-C-methyl-D-erythritol 2,4-cyclodiphosphate synthase; it reads FTGNGFDVHA…NLGYFDWRKF (159 aa). Residues Asp219 and His221 each coordinate a divalent metal cation. 4-CDP-2-C-methyl-D-erythritol 2-phosphate is bound by residues 219–221 and 245–246; these read DVH and HS. Residue His253 coordinates a divalent metal cation. Residues 267 to 269, 272 to 276, 341 to 344, Phe348, and Arg351 contribute to the 4-CDP-2-C-methyl-D-erythritol 2-phosphate site; these read DIG, FPDTD, and STTE.

The protein in the N-terminal section; belongs to the IspD/TarI cytidylyltransferase family. IspD subfamily. In the C-terminal section; belongs to the IspF family. The cofactor is a divalent metal cation.

The enzyme catalyses 2-C-methyl-D-erythritol 4-phosphate + CTP + H(+) = 4-CDP-2-C-methyl-D-erythritol + diphosphate. It carries out the reaction 4-CDP-2-C-methyl-D-erythritol 2-phosphate = 2-C-methyl-D-erythritol 2,4-cyclic diphosphate + CMP. Its pathway is isoprenoid biosynthesis; isopentenyl diphosphate biosynthesis via DXP pathway; isopentenyl diphosphate from 1-deoxy-D-xylulose 5-phosphate: step 2/6. It functions in the pathway isoprenoid biosynthesis; isopentenyl diphosphate biosynthesis via DXP pathway; isopentenyl diphosphate from 1-deoxy-D-xylulose 5-phosphate: step 4/6. Its function is as follows. Bifunctional enzyme that catalyzes the formation of 4-diphosphocytidyl-2-C-methyl-D-erythritol from CTP and 2-C-methyl-D-erythritol 4-phosphate (MEP) (IspD), and catalyzes the conversion of 4-diphosphocytidyl-2-C-methyl-D-erythritol 2-phosphate (CDP-ME2P) to 2-C-methyl-D-erythritol 2,4-cyclodiphosphate (ME-CPP) with a corresponding release of cytidine 5-monophosphate (CMP) (IspF). The sequence is that of Bifunctional enzyme IspD/IspF from Campylobacter hominis (strain ATCC BAA-381 / DSM 21671 / CCUG 45161 / LMG 19568 / NCTC 13146 / CH001A).